Here is a 188-residue protein sequence, read N- to C-terminus: dCTP deaminase (188 aa).

Residues 111 to 116 (KSTYAR), 135 to 137 (TLE), Gln156, Tyr170, and Gln180 contribute to the dCTP site. Glu137 serves as the catalytic Proton donor/acceptor.

The protein belongs to the dCTP deaminase family. Homotrimer.

The enzyme catalyses dCTP + H2O + H(+) = dUTP + NH4(+). The protein operates within pyrimidine metabolism; dUMP biosynthesis; dUMP from dCTP (dUTP route): step 1/2. Its function is as follows. Catalyzes the deamination of dCTP to dUTP. This chain is dCTP deaminase, found in Janthinobacterium sp. (strain Marseille) (Minibacterium massiliensis).